We begin with the raw amino-acid sequence, 678 residues long: Pentatricopeptide repeat-containing protein At5g39980, chloroplastic (678 aa).

The transit peptide at 1 to 64 (MYIEIASSSS…NKKVWRKQPE (64 aa)) directs the protein to the chloroplast. 14 PPR repeats span residues 154–188 (SVFA…ALAP), 189–223 (DRYT…RVSG), 224–258 (DLVL…GITP), 259–293 (DLVA…GVLP), 294–328 (NTVS…NCAL), 329–363 (DLTT…DIEP), 364–398 (NVVS…DIEQ), 399–433 (NVVT…GIEP), 434–468 (NAIT…GVEI), 469–503 (DQVL…DNIP), 535–569 (DISV…GYFP), 570–604 (DSNV…GCVF), 605–638 (PDEV…DPNV), and 639–674 (NSKE…GILK).

This sequence belongs to the PPR family. P subfamily.

Its subcellular location is the plastid. The protein localises to the chloroplast. The protein is Pentatricopeptide repeat-containing protein At5g39980, chloroplastic of Arabidopsis thaliana (Mouse-ear cress).